The primary structure comprises 434 residues: 3-phosphoshikimate 1-carboxyvinyltransferase (434 aa).

Residues Lys-15, Ser-16, and Arg-20 each coordinate 3-phosphoshikimate. Lys-15 is a phosphoenolpyruvate binding site. Residues Gly-96 and Arg-124 each coordinate phosphoenolpyruvate. Positions 169, 171, 195, 319, and 346 each coordinate 3-phosphoshikimate. A phosphoenolpyruvate-binding site is contributed by Gln-171. Asp-319 functions as the Proton acceptor in the catalytic mechanism. Residues Arg-350 and Arg-394 each contribute to the phosphoenolpyruvate site.

It belongs to the EPSP synthase family. In terms of assembly, monomer.

It localises to the cytoplasm. The catalysed reaction is 3-phosphoshikimate + phosphoenolpyruvate = 5-O-(1-carboxyvinyl)-3-phosphoshikimate + phosphate. The protein operates within metabolic intermediate biosynthesis; chorismate biosynthesis; chorismate from D-erythrose 4-phosphate and phosphoenolpyruvate: step 6/7. Functionally, catalyzes the transfer of the enolpyruvyl moiety of phosphoenolpyruvate (PEP) to the 5-hydroxyl of shikimate-3-phosphate (S3P) to produce enolpyruvyl shikimate-3-phosphate and inorganic phosphate. The polypeptide is 3-phosphoshikimate 1-carboxyvinyltransferase (Chlorobaculum parvum (strain DSM 263 / NCIMB 8327) (Chlorobium vibrioforme subsp. thiosulfatophilum)).